We begin with the raw amino-acid sequence, 169 residues long: Macrocypin-1a (169 aa).

The protein belongs to the protease inhibitor I85 family.

In terms of biological role, inhibits papain and cysteine cathepsin endopeptidases, and also inhibits cathepsins B and H, which exhibit both exopeptidase and endopeptidase activities. This is Macrocypin-1a from Macrolepiota procera (Parasol mushroom).